A 242-amino-acid chain; its full sequence is N-alpha-acetyltransferase 60 (242 aa).

Residues 1-192 are Cytoplasmic-facing; sequence MTEVVPSSAL…GGHPPWTILD (192 aa). Residues 13 to 182 enclose the N-acetyltransferase domain; that stretch reads VSLRLLCHDD…DGFTYVLYIN (170 aa). Y38 contacts substrate. Residue K79 is modified to N6-acetyllysine; by autocatalysis. Y97 is a catalytic residue. Residue L99 coordinates substrate. 101–103 contacts acetyl-CoA; it reads LGV. N6-acetyllysine; by autocatalysis is present on residues K105, K109, and K121. Residue 109-114 participates in acetyl-CoA binding; that stretch reads KHGIGS. Residue H138 is part of the active site. Acetyl-CoA-binding positions include N143 and 150-153; that span reads YENR. K156 is modified (N6-acetyllysine; by autocatalysis). The tract at residues 162-173 is required for homodimerization; it reads PYYYSIRGVLKD. Y165 is a binding site for substrate. Residues 193-236 constitute an intramembrane region (helical); the sequence is YIQHLGSALASLSPCSIPHRVYRQAHSLLCSFLPWSGISSKSGI. Over 237–242 the chain is Cytoplasmic; that stretch reads EYSRTM.

It belongs to the acetyltransferase family. NAA60 subfamily. Monomer and homodimer; monomer in presence of substrate and homodimer in its absence. In terms of processing, acetylated: autoacetylation is required for optimal acetyltransferase activity.

The protein localises to the golgi apparatus membrane. It carries out the reaction N-terminal L-methionyl-[transmembrane protein] + acetyl-CoA = N-terminal N(alpha)-acetyl-L-methionyl-[transmembrane protein] + CoA + H(+). The enzyme catalyses L-lysyl-[protein] + acetyl-CoA = N(6)-acetyl-L-lysyl-[protein] + CoA + H(+). Functionally, N-alpha-acetyltransferase that specifically mediates the acetylation of N-terminal residues of the transmembrane proteins, with a strong preference for N-termini facing the cytosol. Displays N-terminal acetyltransferase activity towards a range of N-terminal sequences including those starting with Met-Lys, Met-Val, Met-Ala and Met-Met. Required for normal chromosomal segregation during anaphase. May also show histone acetyltransferase activity; such results are however unclear in vivo and would require additional experimental evidences. In Homo sapiens (Human), this protein is N-alpha-acetyltransferase 60.